The following is a 299-amino-acid chain: MNSKSSARAAIVDTVEAVKKRKYISIEAGTLNNVVEKERKFLKQFLSGRENLRIAARVFTPCELLAPELENLGMLMYRFETDVDNPKILFVGLFFLCSNAFNVSACVRTALTTMYTNSMVDNVLSMINTCKYLEDKVSLFGVTSLVSCGSSCLLSCVMQGNVYDANKENIHGLTVLKEIFLEPDWEPRQHSTQYVYVVHVYKEVLSKLQYGIYVVLTSFQNEDLVVDILRQYFEKERFLFLNYLINSNTTLSYFGSVQRIGRCATEDIKSGFLQYRGITLPVIKLENIFVDLSEKKVFV.

Belongs to the herpesviridae TRX1 protein family. Interacts with TRX2, MCP and capsid vertex component 2/CVC2.

The protein localises to the virion. It is found in the host nucleus. In terms of biological role, structural component of the T=16 icosahedral capsid. The capsid is composed of pentamers and hexamers of major capsid protein/MCP, which are linked together by heterotrimers called triplexes. These triplexes are formed by a single molecule of triplex protein 1/TRX1 and two copies of triplex protein 2/TRX2. Additionally, TRX1 is required for efficient transport of TRX2 to the nucleus, which is the site of capsid assembly. This chain is Triplex capsid protein 1, found in Homo sapiens (Human).